A 449-amino-acid chain; its full sequence is Tubulin alpha-1C chain (449 aa).

The MREC motif signature appears at methionine 1–cysteine 4. A GTP-binding site is contributed by glutamine 11. Lysine 40 is modified (N6-acetyllysine). Residues glutamate 71, serine 140, glycine 144, threonine 145, threonine 179, asparagine 206, and asparagine 228 each contribute to the GTP site. Mg(2+) is bound at residue glutamate 71. Glutamate 254 is a catalytic residue. Residue tyrosine 282 is modified to 3'-nitrotyrosine. The interval glutamate 429 to tyrosine 449 is disordered. A compositionally biased stretch (acidic residues) spans aspartate 431–tyrosine 449. Position 432 is a phosphotyrosine (tyrosine 432). Residue serine 439 is modified to Phosphoserine. At tyrosine 449 the chain carries 3'-nitrotyrosine.

The protein belongs to the tubulin family. As to quaternary structure, dimer of alpha and beta chains. A typical microtubule is a hollow water-filled tube with an outer diameter of 25 nm and an inner diameter of 15 nM. Alpha-beta heterodimers associate head-to-tail to form protofilaments running lengthwise along the microtubule wall with the beta-tubulin subunit facing the microtubule plus end conferring a structural polarity. Microtubules usually have 13 protofilaments but different protofilament numbers can be found in some organisms and specialized cells. Requires Mg(2+) as cofactor. Post-translationally, some glutamate residues at the C-terminus are polyglutamylated, resulting in polyglutamate chains on the gamma-carboxyl group. Polyglutamylation plays a key role in microtubule severing by spastin (SPAST). SPAST preferentially recognizes and acts on microtubules decorated with short polyglutamate tails: severing activity by SPAST increases as the number of glutamates per tubulin rises from one to eight, but decreases beyond this glutamylation threshold. Glutamylation is also involved in cilia motility. Some glutamate residues at the C-terminus are monoglycylated but not polyglycylated due to the absence of functional TTLL10 in human. Monoglycylation is mainly limited to tubulin incorporated into cilia and flagella axonemes, which is required for their stability and maintenance. Flagella glycylation controls sperm motility. Both polyglutamylation and monoglycylation can coexist on the same protein on adjacent residues, and lowering glycylation levels increases polyglutamylation, and reciprocally. In terms of processing, acetylation of alpha chains at Lys-40 is located inside the microtubule lumen. This modification has been correlated with increased microtubule stability, intracellular transport and ciliary assembly. Post-translationally, methylation of alpha chains at Lys-40 is found in mitotic microtubules and is required for normal mitosis and cytokinesis contributing to genomic stability. Nitration of Tyr-449 is irreversible and interferes with normal dynein intracellular distribution. In terms of processing, undergoes a tyrosination/detyrosination cycle, the cyclic removal and re-addition of a C-terminal tyrosine residue by the enzymes tubulin tyrosine carboxypeptidase (MATCAP1/KIAA0895L, VASH1 or VASH2) and tubulin tyrosine ligase (TTL), respectively. Post-translationally, tyrosination promotes microtubule interaction with CAP-Gly domain-containing proteins such as CLIP1, CLIP2 and DCTN1. Tyrosination regulates the initiation of dynein-dynactin motility via interaction with DCTN1, which brings the dynein-dynactin complex into contact with microtubules. In neurons, tyrosinated tubulins mediate the initiation of retrograde vesicle transport. Detyrosination is involved in metaphase plate congression by guiding chromosomes during mitosis: detyrosination promotes interaction with CENPE, promoting pole-proximal transport of chromosomes toward the equator. Detyrosination increases microtubules-dependent mechanotransduction in dystrophic cardiac and skeletal muscle. In cardiomyocytes, detyrosinated microtubules are required to resist to contractile compression during contraction: detyrosination promotes association with desmin (DES) at force-generating sarcomeres, leading to buckled microtubules and mechanical resistance to contraction.

It localises to the cytoplasm. The protein resides in the cytoskeleton. It carries out the reaction GTP + H2O = GDP + phosphate + H(+). Functionally, tubulin is the major constituent of microtubules, a cylinder consisting of laterally associated linear protofilaments composed of alpha- and beta-tubulin heterodimers. Microtubules grow by the addition of GTP-tubulin dimers to the microtubule end, where a stabilizing cap forms. Below the cap, tubulin dimers are in GDP-bound state, owing to GTPase activity of alpha-tubulin. This chain is Tubulin alpha-1C chain (TUBA1C), found in Homo sapiens (Human).